The primary structure comprises 264 residues: Zinc import ATP-binding protein ZnuC (264 aa).

An ABC transporter domain is found at 11-226 (IELQNIKVVF…PTFIHLFGDQ (216 aa)). ATP is bound at residue 43 to 50 (GPNGGGKS).

Belongs to the ABC transporter superfamily. Zinc importer (TC 3.A.1.15.5) family. In terms of assembly, the complex is composed of two ATP-binding proteins (ZnuC), two transmembrane proteins (ZnuB) and a solute-binding protein (ZnuA).

It localises to the cell inner membrane. It carries out the reaction Zn(2+)(out) + ATP(in) + H2O(in) = Zn(2+)(in) + ADP(in) + phosphate(in) + H(+)(in). Its function is as follows. Part of the ABC transporter complex ZnuABC involved in zinc import. Responsible for energy coupling to the transport system. In Mannheimia succiniciproducens (strain KCTC 0769BP / MBEL55E), this protein is Zinc import ATP-binding protein ZnuC.